The primary structure comprises 366 residues: Chorismate synthase (366 aa).

NADP(+)-binding residues include arginine 48 and arginine 54. FMN-binding positions include 125–127, 238–239, glycine 278, 293–297, and arginine 319; these read RSS, NA, and KPTSS.

This sequence belongs to the chorismate synthase family. Homotetramer. FMNH2 is required as a cofactor.

It carries out the reaction 5-O-(1-carboxyvinyl)-3-phosphoshikimate = chorismate + phosphate. It participates in metabolic intermediate biosynthesis; chorismate biosynthesis; chorismate from D-erythrose 4-phosphate and phosphoenolpyruvate: step 7/7. Its function is as follows. Catalyzes the anti-1,4-elimination of the C-3 phosphate and the C-6 proR hydrogen from 5-enolpyruvylshikimate-3-phosphate (EPSP) to yield chorismate, which is the branch point compound that serves as the starting substrate for the three terminal pathways of aromatic amino acid biosynthesis. This reaction introduces a second double bond into the aromatic ring system. The polypeptide is Chorismate synthase (Burkholderia cenocepacia (strain HI2424)).